The primary structure comprises 177 residues: MSRVAKTPVAIPAGVDVSIKDDQINVKGTGGALSQAQNALVKISNNEGKLSFEPVNDSREANAMSGTMRQLVNNMVVGVSKGFEKKLSLVGVGFKASASGSKLNLAIGFSHPVNFEMPAGITVTTPTPTEILVKGADRQAVGQMAAEIRAVRPPEPYKGKGIRYSDEKVVIKETKKK.

It belongs to the universal ribosomal protein uL6 family. As to quaternary structure, part of the 50S ribosomal subunit.

This protein binds to the 23S rRNA, and is important in its secondary structure. It is located near the subunit interface in the base of the L7/L12 stalk, and near the tRNA binding site of the peptidyltransferase center. The sequence is that of Large ribosomal subunit protein uL6 from Delftia acidovorans (strain DSM 14801 / SPH-1).